The chain runs to 429 residues: Enolase (429 aa).

Gln163 contributes to the (2R)-2-phosphoglycerate binding site. Glu205 functions as the Proton donor in the catalytic mechanism. Mg(2+)-binding residues include Asp242, Glu286, and Asp313. (2R)-2-phosphoglycerate contacts are provided by Lys338, Arg367, Ser368, and Lys389. The active-site Proton acceptor is Lys338.

It belongs to the enolase family. Requires Mg(2+) as cofactor.

The protein resides in the cytoplasm. It localises to the secreted. The protein localises to the cell surface. It carries out the reaction (2R)-2-phosphoglycerate = phosphoenolpyruvate + H2O. It participates in carbohydrate degradation; glycolysis; pyruvate from D-glyceraldehyde 3-phosphate: step 4/5. In terms of biological role, catalyzes the reversible conversion of 2-phosphoglycerate (2-PG) into phosphoenolpyruvate (PEP). It is essential for the degradation of carbohydrates via glycolysis. In Thermoanaerobacter sp. (strain X514), this protein is Enolase.